Consider the following 351-residue polypeptide: Transmembrane protein DDB_G0272716 (351 aa).

Residues Asn-4 and Asn-59 are each glycosylated (N-linked (GlcNAc...) asparagine). Helical transmembrane passes span 175 to 195 (FSSLFGVISGFLGIGSVTAIG) and 215 to 235 (VVAPICAPVLLTFGCLVGAFI). N-linked (GlcNAc...) asparagine glycosylation occurs at Asn-345.

It localises to the membrane. In Dictyostelium discoideum (Social amoeba), this protein is Transmembrane protein DDB_G0272716.